We begin with the raw amino-acid sequence, 846 residues long: Neurofilament medium polypeptide (846 aa).

Residues 1 to 10 are compositionally biased toward polar residues; the sequence is MSYTLDSLGN. Residues 1–52 are disordered; the sequence is MSYTLDSLGNPSAYRRVPTETRSSFSRVSGSPSSGFRSQSWSRGSPSTVSSS. The residue at position 2 (serine 2) is an N-acetylserine. Residues 2–104 form a head region; that stretch reads SYTLDSLGNP…LSRSNEKEQL (103 aa). A compositionally biased stretch (low complexity) spans 22-45; sequence RSSFSRVSGSPSSGFRSQSWSRGS. Phosphoserine is present on serine 31. Position 43 is an omega-N-methylarginine (arginine 43). Threonine 48 carries O-linked (GlcNAc) threonine glycosylation. Position 98 is a phosphoserine (serine 98). The region spanning 100-411 is the IF rod domain; the sequence is EKEQLQGLND…KLLEGEETRF (312 aa). Positions 104-135 are coil 1A; sequence LQGLNDRFAGYIEKVHYLEQQNKEIEAEIHAL. Positions 136 to 148 are linker 1; the sequence is RQKQASHAQLGDA. The tract at residues 149–247 is coil 1B; the sequence is YDQEIRELRA…EEEVADLLAQ (99 aa). Phosphoserine is present on serine 225. The tract at residues 248–264 is linker 12; sequence IQASHITVERKDYLKTD. The coil 2A stretch occupies residues 265–286; that stretch reads ISTALKEIRSQLECHSDQNMHQ. The interval 287 to 290 is linker 2; that stretch reads AEEW. Positions 291-411 are coil 2B; sequence FKCRYAKLTE…KLLEGEETRF (121 aa). Tyrosine 319 carries the post-translational modification Phosphotyrosine. A phosphoserine mark is found at serine 345, serine 417, and serine 429. The tract at residues 412-845 is tail; sequence STFSGSITGP…HAIVKEVTQG (434 aa). O-linked (GlcNAc) threonine glycosylation occurs at threonine 431. Phosphoserine is present on residues serine 467 and serine 483. Residues 483-783 are disordered; it reads SAKEEKEEAE…GEDRSDDKVV (301 aa). Residues 489–499 show a composition bias toward acidic residues; it reads EEAEEKEEEPE. Residues 500 to 510 are compositionally biased toward basic and acidic residues; it reads VEKSPVKSPEA. Residues serine 503 and serine 507 each carry the phosphoserine modification. The segment covering 511-533 has biased composition (acidic residues); it reads KEEEEGEKEEEEEGQEEEEEEDE. The segment covering 534–553 has biased composition (basic and acidic residues); it reads GVKSDQAEEGGSEKEGSSEK. Phosphoserine is present on residues serine 537, serine 545, serine 550, and serine 551. Positions 554–575 are enriched in acidic residues; sequence DEGEQEEEGETEAEGEGEEAEA. Phosphothreonine is present on threonine 564. Residues 576 to 603 are compositionally biased toward basic and acidic residues; that stretch reads KEEKKTEGKVEEMAIKEEIKVEKPEKAK. Phosphoserine is present on residues serine 604, serine 609, serine 643, serine 667, serine 687, serine 713, serine 721, serine 751, and serine 767. Composition is skewed to basic and acidic residues over residues 610-675 and 687-709; these read PVEE…KAVE and SLEKDTKEEKPQQQEKVKEKAEE. Basic and acidic residues-rich tracts occupy residues 718 to 730 and 746 to 758; these read GDKSPQESKKEDI and TQEKGSGQEEEKG. Over residues 769-783 the composition is skewed to basic and acidic residues; that stretch reads AEEKKGEDRSDDKVV.

The protein belongs to the intermediate filament family. In terms of assembly, forms heterodimers with NEFL; which can further hetero-oligomerize (in vitro). Forms heterodimers with INA (in vitro). Post-translationally, there are a number of repeats of the tripeptide K-S-P, NFM is phosphorylated on a number of the serines in this motif. It is thought that phosphorylation of NFM results in the formation of interfilament cross bridges that are important in the maintenance of axonal caliber. Phosphorylation seems to play a major role in the functioning of the larger neurofilament polypeptides (NF-M and NF-H), the levels of phosphorylation being altered developmentally and coincidentally with a change in the neurofilament function. In terms of processing, phosphorylated in the head and rod regions by the PKC kinase PKN1, leading to the inhibition of polymerization. As to expression, expressed in the dorsal root ganglion neurons (at protein level).

It localises to the cytoplasm. Its subcellular location is the cytoskeleton. It is found in the cell projection. The protein resides in the axon. Its function is as follows. Neurofilaments usually contain three intermediate filament proteins: NEFL, NEFM, and NEFH which are involved in the maintenance of neuronal caliber. May additionally cooperate with the neuronal intermediate filament proteins PRPH and INA to form neuronal filamentous networks. The protein is Neurofilament medium polypeptide (Nefm) of Rattus norvegicus (Rat).